A 37-amino-acid polypeptide reads, in one-letter code: Large ribosomal subunit protein bL36 (37 aa).

The protein belongs to the bacterial ribosomal protein bL36 family.

The protein is Large ribosomal subunit protein bL36 of Hydrogenobaculum sp. (strain Y04AAS1).